The sequence spans 252 residues: uncharacterized protein (252 aa).

This is an uncharacterized protein from Rickettsia prowazekii (strain Madrid E).